The primary structure comprises 218 residues: Histone H1 (218 aa).

The segment covering 1–19 (MSETAPVAAPAVSAPGAKA) has biased composition (low complexity). Disordered stretches follow at residues 1–42 (MSET…PSVT) and 89–218 (VSKG…TKKK). Serine 2 is modified (N-acetylserine). In terms of domain architecture, H15 spans 37–110 (AGPSVTELIT…GASGSFKLNK (74 aa)). Basic residues-rich tracts occupy residues 118 to 133 (KATKKKPAAKPKKPAA), 141 to 158 (KKPKKAAAVKKSPKKAKK), 166 to 184 (KAAKSPKKATKAGRPKKTA), and 191 to 218 (KAVKPKAAKSKAAKPKAAKAKKAATKKK).

It belongs to the histone H1/H5 family.

It localises to the nucleus. The protein localises to the chromosome. Histones H1 are necessary for the condensation of nucleosome chains into higher-order structures. This Gallus gallus (Chicken) protein is Histone H1.